The chain runs to 663 residues: DNA ligase (663 aa).

NAD(+)-binding positions include 34-38 (DYEYD), 83-84 (SL), and Glu-114. Residue Lys-116 is the N6-AMP-lysine intermediate of the active site. 4 residues coordinate NAD(+): Arg-137, Glu-171, Lys-286, and Lys-310. Residues Cys-404, Cys-407, Cys-422, and Cys-427 each coordinate Zn(2+). One can recognise a BRCT domain in the interval 585–663 (TVESPLTGKN…ADEFIKLANG (79 aa)).

It belongs to the NAD-dependent DNA ligase family. LigA subfamily. Requires Mg(2+) as cofactor. Mn(2+) serves as cofactor.

The catalysed reaction is NAD(+) + (deoxyribonucleotide)n-3'-hydroxyl + 5'-phospho-(deoxyribonucleotide)m = (deoxyribonucleotide)n+m + AMP + beta-nicotinamide D-nucleotide.. In terms of biological role, DNA ligase that catalyzes the formation of phosphodiester linkages between 5'-phosphoryl and 3'-hydroxyl groups in double-stranded DNA using NAD as a coenzyme and as the energy source for the reaction. It is essential for DNA replication and repair of damaged DNA. This Brachyspira hyodysenteriae (strain ATCC 49526 / WA1) protein is DNA ligase.